Reading from the N-terminus, the 285-residue chain is Protoheme IX farnesyltransferase (285 aa).

The next 9 membrane-spanning stretches (helical) occupy residues 8–28, 36–56, 80–100, 107–127, 133–153, 163–183, 209–229, 232–252, and 265–285; these read ITKP…FLFA, YVLF…ACVF, LLPV…GLSI, FISM…YTMF, FYST…GYTA, ILLF…ISIM, IFFY…LGYL, NFLL…YSNI, and FYFS…DVFF.

The protein belongs to the UbiA prenyltransferase family. Protoheme IX farnesyltransferase subfamily.

Its subcellular location is the cell membrane. The enzyme catalyses heme b + (2E,6E)-farnesyl diphosphate + H2O = Fe(II)-heme o + diphosphate. The protein operates within porphyrin-containing compound metabolism; heme O biosynthesis; heme O from protoheme: step 1/1. Functionally, converts heme B (protoheme IX) to heme O by substitution of the vinyl group on carbon 2 of heme B porphyrin ring with a hydroxyethyl farnesyl side group. The polypeptide is Protoheme IX farnesyltransferase (Buchnera aphidicola subsp. Acyrthosiphon pisum (strain Tuc7)).